Reading from the N-terminus, the 648-residue chain is Bifunctional lysine-specific demethylase and histidyl-hydroxylase NO66 (648 aa).

The segment at 1–168 (MSKVSSIFDT…KGAKAAKKNK (168 aa)) is disordered. Residues 17 to 28 (PATTENGAAAKP) show a composition bias toward low complexity. Over residues 109 to 119 (DHRKHKEKLRK) the composition is skewed to basic residues. The segment covering 123 to 137 (GVENSRQAAASTSML) has biased composition (polar residues). Over residues 155–168 (PVHHKGAKAAKKNK) the composition is skewed to basic residues. The JmjC domain occupies 308 to 453 (CSIRMLNPQT…DLLELYLPHA (146 aa)). Fe cation is bound by residues His-354, Asp-356, and His-419.

This sequence belongs to the ROX family. NO66 subfamily. Requires Fe(2+) as cofactor.

It is found in the nucleus. The enzyme catalyses N(6),N(6)-dimethyl-L-lysyl(36)-[histone H3] + 2 2-oxoglutarate + 2 O2 = L-lysyl(36)-[histone H3] + 2 formaldehyde + 2 succinate + 2 CO2. Oxygenase that can act as both a histone lysine demethylase and a ribosomal histidine hydroxylase. Specifically demethylates 'Lys-4' (H3K4me) and 'Lys-36' (H3K36me) of histone H3, thereby playing a central role in histone code. The sequence is that of Bifunctional lysine-specific demethylase and histidyl-hydroxylase NO66 from Culex quinquefasciatus (Southern house mosquito).